Here is a 592-residue protein sequence, read N- to C-terminus: Sodium- and chloride-dependent transporter XTRP3 (592 aa).

Residues Met-1–Arg-5 lie on the Cytoplasmic side of the membrane. A helical transmembrane segment spans residues Pro-6–Gly-26. The Extracellular portion of the chain corresponds to Asn-27–Ser-42. Residues Phe-43–Leu-63 form a helical membrane-spanning segment. The Cytoplasmic segment spans residues Ala-64–Thr-79. A helical transmembrane segment spans residues Ile-80–Met-100. The Extracellular segment spans residues Tyr-101–Gly-165. Residue Asn-131 is glycosylated (N-linked (GlcNAc...) asparagine). The helical transmembrane segment at Val-166–Leu-186 threads the bilayer. Over Arg-187 to Lys-194 the chain is Cytoplasmic. A helical transmembrane segment spans residues Val-195–Leu-215. The Extracellular portion of the chain corresponds to Thr-216–Trp-241. A helical transmembrane segment spans residues Ile-242–Phe-262. Residues Ala-263–Ala-276 are Cytoplasmic-facing. Residues Ile-277–Ile-297 traverse the membrane as a helical segment. The Extracellular portion of the chain corresponds to Tyr-298 to Gln-389. The N-linked (GlcNAc...) asparagine glycan is linked to Asn-357. Residues Leu-390–Asn-410 form a helical membrane-spanning segment. Topologically, residues Thr-411 to Glu-431 are cytoplasmic. A helical transmembrane segment spans residues Ala-432–Ala-452. The Extracellular portion of the chain corresponds to Gly-453–Ala-465. The helical transmembrane segment at Thr-466–Leu-486 threads the bilayer. Over Arg-487–Tyr-504 the chain is Cytoplasmic. A helical membrane pass occupies residues Trp-505 to Leu-525. Topologically, residues Ser-526 to Tyr-554 are extracellular. Residues Ala-555–Leu-575 form a helical membrane-spanning segment. The Cytoplasmic segment spans residues Gly-576–Ala-592.

The protein belongs to the sodium:neurotransmitter symporter (SNF) (TC 2.A.22) family. SLC6A20 subfamily. Kidney and small intestine. Expressed in the S3 segment of the proximal tubule. Expressed in neurons.

The protein localises to the apical cell membrane. It carries out the reaction L-proline(out) + chloride(out) + 2 Na(+)(out) = L-proline(in) + chloride(in) + 2 Na(+)(in). The catalysed reaction is L-pipecolate(out) + chloride(out) + 2 Na(+)(out) = L-pipecolate(in) + chloride(in) + 2 Na(+)(in). The enzyme catalyses sarcosine(out) + chloride(out) + 2 Na(+)(out) = sarcosine(in) + chloride(in) + 2 Na(+)(in). It catalyses the reaction N-methyl-L-proline(out) + chloride(out) + 2 Na(+)(out) = N-methyl-L-proline(in) + chloride(in) + 2 Na(+)(in). It carries out the reaction 2-methyl-2-(methylamino)propanoate(out) + chloride(out) + 2 Na(+)(out) = 2-methyl-2-(methylamino)propanoate(in) + chloride(in) + 2 Na(+)(in). The catalysed reaction is glycine betaine(out) + chloride(out) + 2 Na(+)(out) = glycine betaine(in) + chloride(in) + 2 Na(+)(in). The enzyme catalyses glycine(out) + chloride(out) + 2 Na(+)(out) = glycine(in) + chloride(in) + 2 Na(+)(in). In terms of biological role, mediates the Na(+)- and Cl(-)-dependent uptake of imino acids such as L-proline, N-methyl-L-proline and pipecolate as well as N-methylated amino acids. Also transports glycine, regulates proline and glycine homeostasis in the brain playing a role in the modulation of NMDAR currents. This Homo sapiens (Human) protein is Sodium- and chloride-dependent transporter XTRP3.